We begin with the raw amino-acid sequence, 180 residues long: ATP synthase subunit delta (180 aa).

Belongs to the ATPase delta chain family. F-type ATPases have 2 components, F(1) - the catalytic core - and F(0) - the membrane proton channel. F(1) has five subunits: alpha(3), beta(3), gamma(1), delta(1), epsilon(1). F(0) has three main subunits: a(1), b(2) and c(10-14). The alpha and beta chains form an alternating ring which encloses part of the gamma chain. F(1) is attached to F(0) by a central stalk formed by the gamma and epsilon chains, while a peripheral stalk is formed by the delta and b chains.

It is found in the cell inner membrane. F(1)F(0) ATP synthase produces ATP from ADP in the presence of a proton or sodium gradient. F-type ATPases consist of two structural domains, F(1) containing the extramembraneous catalytic core and F(0) containing the membrane proton channel, linked together by a central stalk and a peripheral stalk. During catalysis, ATP synthesis in the catalytic domain of F(1) is coupled via a rotary mechanism of the central stalk subunits to proton translocation. Its function is as follows. This protein is part of the stalk that links CF(0) to CF(1). It either transmits conformational changes from CF(0) to CF(1) or is implicated in proton conduction. The sequence is that of ATP synthase subunit delta from Anaplasma phagocytophilum (strain HZ).